Consider the following 199-residue polypeptide: Ras-related and estrogen-regulated growth inhibitor (199 aa).

GTP-binding positions include Gly-13–Ser-20, Asp-60–Gln-64, and Asn-118–Asp-121.

Belongs to the small GTPase superfamily. Ras family.

The protein localises to the cytoplasm. The catalysed reaction is GTP + H2O = GDP + phosphate + H(+). Functionally, binds GDP/GTP and possesses intrinsic GTPase activity. Has higher affinity for GDP than for GTP. In Bos taurus (Bovine), this protein is Ras-related and estrogen-regulated growth inhibitor (RERG).